A 124-amino-acid polypeptide reads, in one-letter code: Small ribosomal subunit protein uS12 (124 aa).

Asp-89 carries the 3-methylthioaspartic acid modification.

It belongs to the universal ribosomal protein uS12 family. In terms of assembly, part of the 30S ribosomal subunit. Contacts proteins S8 and S17. May interact with IF1 in the 30S initiation complex.

In terms of biological role, with S4 and S5 plays an important role in translational accuracy. Interacts with and stabilizes bases of the 16S rRNA that are involved in tRNA selection in the A site and with the mRNA backbone. Located at the interface of the 30S and 50S subunits, it traverses the body of the 30S subunit contacting proteins on the other side and probably holding the rRNA structure together. The combined cluster of proteins S8, S12 and S17 appears to hold together the shoulder and platform of the 30S subunit. This is Small ribosomal subunit protein uS12 from Baumannia cicadellinicola subsp. Homalodisca coagulata.